A 419-amino-acid polypeptide reads, in one-letter code: 20-hydroxy-prefusarin hydrolase FUS2 (419 aa).

Ser238 is an active-site residue.

The protein belongs to the AB hydrolase superfamily. FUS2 hydrolase family.

Its pathway is mycotoxin biosynthesis. Functionally, 20-hydroxy-prefusarin hydrolase; part of the gene cluster that mediates the biosynthesis of the mycotoxin fusarin C. Within the cluster, FUS1, FUS2, FUS8 and FUS9 are sufficient for fusarin production. The roles of the other FUS members are yet undetermined. The fusarin C synthetase FUS1 is responsible for the condensation of one acetyl-coenzyme A (CoA) unit with six malonyl-CoA units and the amide linkage of the arising heptaketide and homoserine, subsequently releasing the first intermediate, prefusarin, as an alcohol with an open ring structure. The cytochrome P450 monooxygenase FUS8 participates in multiple oxidation processes at carbon C-20 and is able to use the FUS1 product as substrate, resulting in formation of 20-hydroxy-prefusarin. This reaction seems to be essential before the 2-pyrrolidone ring closure can be catalyzed by FUS2, generating 20-hydroxy-fusarin. FUS8 is able to further oxidizes carbon C-20 after ring closure, resulting in the formation of carboxy-fusarin C. As the last step, FUS9 methylates the hydroxyl group at C-21 to generate fusarin C. Fusarin C can then rearrange to epi-fusarin C, the (z)-isomers, and fusarin A and fusarin D. The sequence is that of 20-hydroxy-prefusarin hydrolase FUS2 from Gibberella moniliformis (strain M3125 / FGSC 7600) (Maize ear and stalk rot fungus).